The sequence spans 914 residues: TRPM8 channel-associated factor 3 (914 aa).

The 300-residue stretch at 533–832 folds into the Peptidase M60 domain; it reads NSWVSTGLYL…TYLQLQEGFG (300 aa).

This sequence belongs to the TCAF family.

Its function is as follows. May play a role in the regulation of the cation channel TRPM8 activity. The protein is TRPM8 channel-associated factor 3 of Rattus norvegicus (Rat).